A 348-amino-acid chain; its full sequence is Protein RecA (348 aa).

69–76 (GPESSGKT) contributes to the ATP binding site.

The protein belongs to the RecA family.

The protein resides in the cytoplasm. In terms of biological role, can catalyze the hydrolysis of ATP in the presence of single-stranded DNA, the ATP-dependent uptake of single-stranded DNA by duplex DNA, and the ATP-dependent hybridization of homologous single-stranded DNAs. It interacts with LexA causing its activation and leading to its autocatalytic cleavage. The sequence is that of Protein RecA from Picosynechococcus sp. (strain ATCC 27264 / PCC 7002 / PR-6) (Agmenellum quadruplicatum).